The chain runs to 68 residues: Large ribosomal subunit protein bL35 (68 aa).

This sequence belongs to the bacterial ribosomal protein bL35 family.

The chain is Large ribosomal subunit protein bL35 from Orientia tsutsugamushi (strain Ikeda) (Rickettsia tsutsugamushi).